The sequence spans 41 residues: Trypsin inhibitor (41 aa).

3 disulfides stabilise this stretch: C15–C26, C17–C24, and C29–C37.

Its function is as follows. Has two active sites that simultaneously bind and inhibit trypsin. In Trichosanthes kirilowii (Chinese snake gourd), this protein is Trypsin inhibitor.